Consider the following 438-residue polypeptide: Flagellum-specific ATP synthase (438 aa).

The segment at 119–139 (GLSPVSTEQSPPNPMKRPPIR) is disordered. Position 165-172 (165-172 (AGSGVGKS)) interacts with ATP.

Belongs to the ATPase alpha/beta chains family.

The protein localises to the cytoplasm. It catalyses the reaction ATP + H2O + 4 H(+)(in) = ADP + phosphate + 5 H(+)(out). In terms of biological role, probable catalytic subunit of a protein translocase for flagellum-specific export, or a proton translocase involved in local circuits at the flagellum. The polypeptide is Flagellum-specific ATP synthase (fliI) (Bacillus subtilis (strain 168)).